Consider the following 75-residue polypeptide: Sec-independent protein translocase protein TatA (75 aa).

Residues 1-21 (MGGISIWQLLIIVAIIVLLFG) form a helical membrane-spanning segment. The interval 50-75 (DAEFKSLNKDESATAGSEKVKDKEQA) is disordered.

Belongs to the TatA/E family. The Tat system comprises two distinct complexes: a TatABC complex, containing multiple copies of TatA, TatB and TatC subunits, and a separate TatA complex, containing only TatA subunits. Substrates initially bind to the TatABC complex, which probably triggers association of the separate TatA complex to form the active translocon.

It is found in the cell inner membrane. In terms of biological role, part of the twin-arginine translocation (Tat) system that transports large folded proteins containing a characteristic twin-arginine motif in their signal peptide across membranes. TatA could form the protein-conducting channel of the Tat system. This is Sec-independent protein translocase protein TatA from Mannheimia succiniciproducens (strain KCTC 0769BP / MBEL55E).